The sequence spans 806 residues: Mitochondrial intermediate peptidase (806 aa).

The N-terminal 29 residues, 1–29, are a transit peptide targeting the mitochondrion; the sequence is MLSRHLTVLRSACRVSHDLRVPSTQAVRK. Histidine 581 serves as a coordination point for Zn(2+). Residue glutamate 582 is part of the active site. Zn(2+) is bound by residues histidine 585 and histidine 588.

Belongs to the peptidase M3 family. Zn(2+) serves as cofactor.

The protein localises to the mitochondrion matrix. It catalyses the reaction Release of an N-terminal octapeptide as second stage of processing of some proteins imported into the mitochondrion.. Functionally, cleaves proteins, imported into the mitochondrion, to their mature size. While most mitochondrial precursor proteins are processed to the mature form in one step by mitochondrial processing peptidase (MPP), the sequential cleavage by MIP of an octapeptide after initial processing by MPP is a required step for a subgroup of nuclear-encoded precursor proteins destined for the matrix or the inner membrane. This Malassezia globosa (strain ATCC MYA-4612 / CBS 7966) (Dandruff-associated fungus) protein is Mitochondrial intermediate peptidase (OCT1).